The chain runs to 972 residues: SWI/SNF-related matrix-associated actin-dependent regulator of chromatin subfamily A containing DEAD/H box 1A (972 aa).

3 disordered regions span residues 15 to 76 (NAVG…SDLQ), 125 to 177 (DEDS…EKQE), and 217 to 333 (SSTD…EDSI). 2 stretches are compositionally biased toward basic and acidic residues: residues 22–42 (KSPD…RKAD) and 63–72 (EVVRMGKDSA). The region spanning 82–127 (DMEDKIIKLLEIFPQKSKKDLLEVIENTSTLDGAVAHCLMIYGDED) is the CUE 1 domain. Residues 128–138 (SGGRKDKGGRS) are compositionally biased toward basic and acidic residues. The segment covering 156 to 169 (SESEDEDSEDEESE) has biased composition (acidic residues). Residues 175–218 (KQEALLKKLKRKLPDIEKEVLRDILKEHDWDYENALGSLLVFSS) form the CUE 2 domain. Basic and acidic residues predominate over residues 237-246 (HSKEKTDKIT). Polar residues predominate over residues 247–263 (QRPSGSSSLSRWLTAAS). The span at 279-290 (KSALSKSTSKNS) shows a compositional bias: low complexity. Residues 307–332 (ASEDEDEIDSDVDSMSDDQDSEDEDS) show a composition bias toward acidic residues. The Helicase ATP-binding domain maps to 460 to 628 (ILLHQHKLSG…MSLLNFIMPS (169 aa)). 473–480 (DEMGLGKT) contributes to the ATP binding site. A DEGH box motif is present at residues 579 to 582 (DEGH). The 162-residue stretch at 805 to 966 (LLTKTLAKLK…AITEQMAELL (162 aa)) folds into the Helicase C-terminal domain.

This sequence belongs to the SNF2/RAD54 helicase family.

It localises to the nucleus. The protein resides in the chromosome. It carries out the reaction ATP + H2O = ADP + phosphate + H(+). Functionally, DNA helicase that possesses intrinsic ATP-dependent nucleosome-remodeling activity and is both required for DNA repair and heterochromatin organization. Promotes DNA end resection of double-strand breaks (DSBs) following DNA damage: probably acts by weakening histone DNA interactions in nucleosomes flanking DSBs. Required for the restoration of heterochromatin organization after replication. This chain is SWI/SNF-related matrix-associated actin-dependent regulator of chromatin subfamily A containing DEAD/H box 1A (smarcad1a), found in Danio rerio (Zebrafish).